The primary structure comprises 262 residues: Ribosome-recycling factor, mitochondrial (262 aa).

The N-terminal 55 residues, 1 to 55 (MALGIRCFRLLHPAFSSYLADLSRPVSEVPMKTVRGRQRDHIQYSAHPAVPVRQF), are a transit peptide targeting the mitochondrion.

The protein belongs to the RRF family.

The protein localises to the mitochondrion. In terms of biological role, responsible for the disassembly of ribosomes from messenger RNA at the termination of mitochondrial protein biosynthesis. Acts in collaboration with GFM2. Promotes mitochondrial ribosome recycling by dissolution of intersubunit contacts. The sequence is that of Ribosome-recycling factor, mitochondrial (Mrrf) from Rattus norvegicus (Rat).